Consider the following 346-residue polypeptide: Elongation factor Ts (346 aa).

The segment at Thr80–Val83 is involved in Mg(2+) ion dislocation from EF-Tu.

It belongs to the EF-Ts family.

It localises to the cytoplasm. In terms of biological role, associates with the EF-Tu.GDP complex and induces the exchange of GDP to GTP. It remains bound to the aminoacyl-tRNA.EF-Tu.GTP complex up to the GTP hydrolysis stage on the ribosome. This Streptococcus pneumoniae (strain ATCC BAA-255 / R6) protein is Elongation factor Ts (tsf).